The primary structure comprises 332 residues: 4-hydroxy-3-methylbut-2-enyl diphosphate reductase (332 aa).

C13 serves as a coordination point for [4Fe-4S] cluster. (2E)-4-hydroxy-3-methylbut-2-enyl diphosphate contacts are provided by H41 and H75. Residues H41 and H75 each contribute to the dimethylallyl diphosphate site. Isopentenyl diphosphate-binding residues include H41 and H75. Residue C97 coordinates [4Fe-4S] cluster. Position 125 (H125) interacts with (2E)-4-hydroxy-3-methylbut-2-enyl diphosphate. A dimethylallyl diphosphate-binding site is contributed by H125. H125 contributes to the isopentenyl diphosphate binding site. E127 acts as the Proton donor in catalysis. A (2E)-4-hydroxy-3-methylbut-2-enyl diphosphate-binding site is contributed by T168. Residue C229 participates in [4Fe-4S] cluster binding. (2E)-4-hydroxy-3-methylbut-2-enyl diphosphate-binding residues include S257, S258, N259, and S306. The dimethylallyl diphosphate site is built by S257, S258, N259, and S306. S257, S258, N259, and S306 together coordinate isopentenyl diphosphate.

It belongs to the IspH family. The cofactor is [4Fe-4S] cluster.

The enzyme catalyses isopentenyl diphosphate + 2 oxidized [2Fe-2S]-[ferredoxin] + H2O = (2E)-4-hydroxy-3-methylbut-2-enyl diphosphate + 2 reduced [2Fe-2S]-[ferredoxin] + 2 H(+). It catalyses the reaction dimethylallyl diphosphate + 2 oxidized [2Fe-2S]-[ferredoxin] + H2O = (2E)-4-hydroxy-3-methylbut-2-enyl diphosphate + 2 reduced [2Fe-2S]-[ferredoxin] + 2 H(+). Its pathway is isoprenoid biosynthesis; dimethylallyl diphosphate biosynthesis; dimethylallyl diphosphate from (2E)-4-hydroxy-3-methylbutenyl diphosphate: step 1/1. It participates in isoprenoid biosynthesis; isopentenyl diphosphate biosynthesis via DXP pathway; isopentenyl diphosphate from 1-deoxy-D-xylulose 5-phosphate: step 6/6. Catalyzes the conversion of 1-hydroxy-2-methyl-2-(E)-butenyl 4-diphosphate (HMBPP) into a mixture of isopentenyl diphosphate (IPP) and dimethylallyl diphosphate (DMAPP). Acts in the terminal step of the DOXP/MEP pathway for isoprenoid precursor biosynthesis. The polypeptide is 4-hydroxy-3-methylbut-2-enyl diphosphate reductase (Chlorobaculum tepidum (strain ATCC 49652 / DSM 12025 / NBRC 103806 / TLS) (Chlorobium tepidum)).